We begin with the raw amino-acid sequence, 494 residues long: Alpha-amylase (494 aa).

The signal sequence occupies residues 1-26; it reads MQISKAALLASLAALVYAQPVTLFKR. Cys-57 and Cys-65 are oxidised to a cystine. Trp-110 contacts substrate. Position 148 (Asn-148) interacts with Ca(2+). His-149 lines the substrate pocket. Cys-177 and Cys-191 are disulfide-bonded. Ca(2+) is bound at residue Asp-202. A glycan (N-linked (GlcNAc...) asparagine) is linked at Asn-224. Arg-231 is a substrate binding site. Residues Asp-233, His-237, and Glu-257 each contribute to the Ca(2+) site. Asp-233 acts as the Nucleophile in catalysis. A substrate-binding site is contributed by 236–237; the sequence is KH. The active-site Proton donor is Glu-257. A substrate-binding site is contributed by Gly-261. A disulfide bond links Cys-267 and Cys-310. 2 residues coordinate substrate: Asp-324 and Arg-371. A disulfide bond links Cys-462 and Cys-493.

The protein belongs to the glycosyl hydrolase 13 family. Requires Ca(2+) as cofactor.

The protein resides in the secreted. The enzyme catalyses Endohydrolysis of (1-&gt;4)-alpha-D-glucosidic linkages in polysaccharides containing three or more (1-&gt;4)-alpha-linked D-glucose units.. This Saccharomycopsis fibuligera (Yeast) protein is Alpha-amylase (ALP1).